Reading from the N-terminus, the 511-residue chain is Apolipoprotein N-acyltransferase (511 aa).

Helical transmembrane passes span 7–29, 58–78, 90–110, 125–145, 163–183, and 192–212; these read PGWPGHLLALAAGALTPLALAPF, GWWYGFGAFGAGTSWIYVSIH, LLMLGFTAGVAFFFALPAWLW, LAFAALWLALELFRSWFLTGF, VPVGGVWLSSFVIALSAALLV, and GASLLLGLVLLLGPWAAGLYL. Positions 230–470 constitute a CN hydrolase domain; that stretch reads IQGNIAQELK…QGILRGEVIP (241 aa). Catalysis depends on glutamate 269, which acts as the Proton acceptor. The active site involves lysine 330. The active-site Nucleophile is the cysteine 382. Residues 482 to 502 form a helical membrane-spanning segment; it reads VWPLAGLAGVLLLWALLGRQL.

This sequence belongs to the CN hydrolase family. Apolipoprotein N-acyltransferase subfamily.

It localises to the cell inner membrane. The enzyme catalyses N-terminal S-1,2-diacyl-sn-glyceryl-L-cysteinyl-[lipoprotein] + a glycerophospholipid = N-acyl-S-1,2-diacyl-sn-glyceryl-L-cysteinyl-[lipoprotein] + a 2-acyl-sn-glycero-3-phospholipid + H(+). It participates in protein modification; lipoprotein biosynthesis (N-acyl transfer). Catalyzes the phospholipid dependent N-acylation of the N-terminal cysteine of apolipoprotein, the last step in lipoprotein maturation. The sequence is that of Apolipoprotein N-acyltransferase from Pseudomonas aeruginosa (strain LESB58).